A 162-amino-acid polypeptide reads, in one-letter code: Lipoprotein signal peptidase (162 aa).

4 helical membrane-spanning segments follow: residues 9-29, 39-59, 66-86, and 95-115; these read LCLV…LVAT, VIHG…FGLF, VRKF…LWLY, and VLSF…IDRF. Active-site residues include Asp-122 and Asp-140. A helical membrane pass occupies residues 136–156; that stretch reads FNVADSAITIGMVVFVYHVIF.

The protein belongs to the peptidase A8 family.

It is found in the cell inner membrane. It carries out the reaction Release of signal peptides from bacterial membrane prolipoproteins. Hydrolyzes -Xaa-Yaa-Zaa-|-(S,diacylglyceryl)Cys-, in which Xaa is hydrophobic (preferably Leu), and Yaa (Ala or Ser) and Zaa (Gly or Ala) have small, neutral side chains.. It functions in the pathway protein modification; lipoprotein biosynthesis (signal peptide cleavage). Its function is as follows. This protein specifically catalyzes the removal of signal peptides from prolipoproteins. The polypeptide is Lipoprotein signal peptidase (Desulforapulum autotrophicum (strain ATCC 43914 / DSM 3382 / VKM B-1955 / HRM2) (Desulfobacterium autotrophicum)).